The sequence spans 161 residues: Phosphopantetheine adenylyltransferase (161 aa).

S9 lines the substrate pocket. Residues 9-10 and H17 contribute to the ATP site; that span reads SF. Substrate-binding residues include K41, V73, and K87. ATP is bound by residues 88–90, E98, and 122–128; these read GLR and YSFVSSS.

Belongs to the bacterial CoaD family. Homohexamer. The cofactor is Mg(2+).

The protein resides in the cytoplasm. The catalysed reaction is (R)-4'-phosphopantetheine + ATP + H(+) = 3'-dephospho-CoA + diphosphate. It participates in cofactor biosynthesis; coenzyme A biosynthesis; CoA from (R)-pantothenate: step 4/5. Reversibly transfers an adenylyl group from ATP to 4'-phosphopantetheine, yielding dephospho-CoA (dPCoA) and pyrophosphate. The chain is Phosphopantetheine adenylyltransferase from Mycobacterium bovis (strain ATCC BAA-935 / AF2122/97).